Consider the following 212-residue polypeptide: Probable GTP-binding protein EngB (212 aa).

The region spanning 38–210 is the EngB-type G domain; that stretch reads SLPEIAFVGK…KASLAKCIKP (173 aa). Residues 46–53, 73–77, 91–94, 158–161, and 189–191 contribute to the GTP site; these read GKSNVGKS, GRTRQ, DLPG, TKSD, and VSN. 2 residues coordinate Mg(2+): Ser-53 and Thr-75.

It belongs to the TRAFAC class TrmE-Era-EngA-EngB-Septin-like GTPase superfamily. EngB GTPase family. Requires Mg(2+) as cofactor.

Necessary for normal cell division and for the maintenance of normal septation. The chain is Probable GTP-binding protein EngB from Rickettsia africae (strain ESF-5).